A 311-amino-acid chain; its full sequence is tRNA-cytidine(32) 2-sulfurtransferase (311 aa).

Residues 47–52 (SGGKDS) carry the PP-loop motif motif. [4Fe-4S] cluster is bound by residues Cys-122, Cys-125, and Cys-213.

The protein belongs to the TtcA family. In terms of assembly, homodimer. It depends on Mg(2+) as a cofactor. The cofactor is [4Fe-4S] cluster.

The protein resides in the cytoplasm. The catalysed reaction is cytidine(32) in tRNA + S-sulfanyl-L-cysteinyl-[cysteine desulfurase] + AH2 + ATP = 2-thiocytidine(32) in tRNA + L-cysteinyl-[cysteine desulfurase] + A + AMP + diphosphate + H(+). It functions in the pathway tRNA modification. Functionally, catalyzes the ATP-dependent 2-thiolation of cytidine in position 32 of tRNA, to form 2-thiocytidine (s(2)C32). The sulfur atoms are provided by the cysteine/cysteine desulfurase (IscS) system. The chain is tRNA-cytidine(32) 2-sulfurtransferase from Klebsiella pneumoniae (strain 342).